Consider the following 286-residue polypeptide: MVDGMKHLILKVTNRCNLNCIYCYANNKNNKDMDFKTAKNAIDYLLNLDNQIKIQFTGGEPLLNFNLIEKIVDYCNDNYSNCNIQYAIQTNATLINEKIAEKIKELDIKVGISIDGLEINDILRPYKNGKPSTLDTLKGMYILKSYNIPFGITTVVTNKNLPYLEEFVKYLIAFGVKSISFDLLKPKKKEHLTLMPNIEEFNKLLNKLGRYPIYIKNLQKRPKDKYCYLNSGDLLFVNEFGDIYLCPTLEGLSCLGNINDKNKIKLPKVKSKGCYAREFLIKTFKK.

In terms of domain architecture, Radical SAM core spans 2–221; that stretch reads VDGMKHLILK…PIYIKNLQKR (220 aa). 3 residues coordinate [4Fe-4S] cluster: Cys16, Cys20, and Cys23.

Belongs to the radical SAM superfamily. Anaerobic sulfatase-maturating enzyme family. [4Fe-4S] cluster serves as cofactor.

This is an uncharacterized protein from Methanocaldococcus jannaschii (strain ATCC 43067 / DSM 2661 / JAL-1 / JCM 10045 / NBRC 100440) (Methanococcus jannaschii).